A 348-amino-acid polypeptide reads, in one-letter code: S-adenosylmethionine:tRNA ribosyltransferase-isomerase (348 aa).

This sequence belongs to the QueA family. In terms of assembly, monomer.

Its subcellular location is the cytoplasm. It catalyses the reaction 7-aminomethyl-7-carbaguanosine(34) in tRNA + S-adenosyl-L-methionine = epoxyqueuosine(34) in tRNA + adenine + L-methionine + 2 H(+). The protein operates within tRNA modification; tRNA-queuosine biosynthesis. Functionally, transfers and isomerizes the ribose moiety from AdoMet to the 7-aminomethyl group of 7-deazaguanine (preQ1-tRNA) to give epoxyqueuosine (oQ-tRNA). This Cytophaga hutchinsonii (strain ATCC 33406 / DSM 1761 / CIP 103989 / NBRC 15051 / NCIMB 9469 / D465) protein is S-adenosylmethionine:tRNA ribosyltransferase-isomerase.